Reading from the N-terminus, the 136-residue chain is Urease subunit beta (136 aa).

Positions 112–136 are disordered; the sequence is ENDEYAGVFGDNGTENVNKKGGKRS.

Belongs to the urease beta subunit family. Heterotrimer of UreA (gamma), UreB (beta) and UreC (alpha) subunits. Three heterotrimers associate to form the active enzyme.

The protein localises to the cytoplasm. It catalyses the reaction urea + 2 H2O + H(+) = hydrogencarbonate + 2 NH4(+). The protein operates within nitrogen metabolism; urea degradation; CO(2) and NH(3) from urea (urease route): step 1/1. The polypeptide is Urease subunit beta (Staphylococcus aureus (strain MRSA252)).